Reading from the N-terminus, the 292-residue chain is Protein/nucleic acid deglycase HchA (292 aa).

Positions 1 to 12 (MSQDVNKLSKQP) are enriched in polar residues. Positions 1–23 (MSQDVNKLSKQPTPDKAEDNAFF) are disordered. The active-site Nucleophile is C190.

Belongs to the peptidase C56 family. HchA subfamily.

The protein resides in the cytoplasm. The catalysed reaction is N(omega)-(1-hydroxy-2-oxopropyl)-L-arginyl-[protein] + H2O = lactate + L-arginyl-[protein] + H(+). It catalyses the reaction N(6)-(1-hydroxy-2-oxopropyl)-L-lysyl-[protein] + H2O = lactate + L-lysyl-[protein] + H(+). The enzyme catalyses S-(1-hydroxy-2-oxopropyl)-L-cysteinyl-[protein] + H2O = lactate + L-cysteinyl-[protein] + H(+). It carries out the reaction N(omega)-(1-hydroxy-2-oxoethyl)-L-arginyl-[protein] + H2O = L-arginyl-[protein] + glycolate + H(+). The catalysed reaction is N(6)-(1-hydroxy-2-oxoethyl)-L-lysyl-[protein] + H2O = glycolate + L-lysyl-[protein] + H(+). It catalyses the reaction S-(1-hydroxy-2-oxoethyl)-L-cysteinyl-[protein] + H2O = glycolate + L-cysteinyl-[protein] + H(+). The enzyme catalyses N(2)-(1-hydroxy-2-oxopropyl)-dGTP + H2O = lactate + dGTP + H(+). It carries out the reaction N(2)-(1-hydroxy-2-oxopropyl)-GTP + H2O = lactate + GTP + H(+). The catalysed reaction is N(2)-(1-hydroxy-2-oxopropyl)-GDP + H2O = lactate + GDP + H(+). It catalyses the reaction N(2)-(1-hydroxy-2-oxopropyl)-GMP + H2O = lactate + GMP + H(+). The enzyme catalyses N(2)-(1-hydroxy-2-oxoethyl)-dGTP + H2O = dGTP + glycolate + H(+). It carries out the reaction N(2)-(1-hydroxy-2-oxoethyl)-GTP + H2O = glycolate + GTP + H(+). The catalysed reaction is N(2)-(1-hydroxy-2-oxoethyl)-GDP + H2O = glycolate + GDP + H(+). It catalyses the reaction N(2)-(1-hydroxy-2-oxoethyl)-GMP + H2O = glycolate + GMP + H(+). The enzyme catalyses an N(2)-(1-hydroxy-2-oxopropyl)-guanosine in RNA + H2O = a guanosine in RNA + lactate + H(+). It carries out the reaction an N(2)-(1-hydroxy-2-oxopropyl)-2'-deoxyguanosine in DNA + H2O = a 2'-deoxyguanosine in DNA + lactate + H(+). The catalysed reaction is an N(2)-(1-hydroxy-2-oxoethyl)-guanosine in RNA + H2O = a guanosine in RNA + glycolate + H(+). It catalyses the reaction an N(2)-(1-hydroxy-2-oxoethyl)-2'-deoxyguanosine in DNA + H2O = a 2'-deoxyguanosine in DNA + glycolate + H(+). In terms of biological role, protein and nucleotide deglycase that catalyzes the deglycation of the Maillard adducts formed between amino groups of proteins or nucleotides and reactive carbonyl groups of glyoxals. Thus, functions as a protein deglycase that repairs methylglyoxal- and glyoxal-glycated proteins, and releases repaired proteins and lactate or glycolate, respectively. Deglycates cysteine, arginine and lysine residues in proteins, and thus reactivates these proteins by reversing glycation by glyoxals. Acts on early glycation intermediates (hemithioacetals and aminocarbinols), preventing the formation of Schiff bases and advanced glycation endproducts (AGE). Also functions as a nucleotide deglycase able to repair glycated guanine in the free nucleotide pool (GTP, GDP, GMP, dGTP) and in DNA and RNA. Is thus involved in a major nucleotide repair system named guanine glycation repair (GG repair), dedicated to reversing methylglyoxal and glyoxal damage via nucleotide sanitization and direct nucleic acid repair. Plays an important role in protecting cells from carbonyl stress. This is Protein/nucleic acid deglycase HchA from Staphylococcus aureus (strain MRSA252).